The chain runs to 278 residues: Tetraspanin-13 (278 aa).

The Cytoplasmic segment spans residues 1–25 (MARDKEDQNNENPSIVQNMSFPFNT). Residues 26 to 46 (IFLISSAIFLVTAAFWFVAVM) form a helical membrane-spanning segment. Over 47–62 (TLHYRTDECNRFVTTP) the chain is Extracellular. The helical transmembrane segment at 63–83 (GIFISFSLLAMSLTGFYAAYF) threads the bilayer. The Cytoplasmic portion of the chain corresponds to 84-92 (KSDCLFRIH). A helical membrane pass occupies residues 93 to 113 (FFIFFLWMFVVVSKAIFVIFL). At 114-249 (HKETNPRLFP…DVHNTSFSIT (136 aa)) the chain is on the extracellular side. Residues Asn-202, Asn-220, and Asn-243 are each glycosylated (N-linked (GlcNAc...) asparagine). Residues 250–270 (VNIIHIIFSLCIGMTGWFAWL) form a helical membrane-spanning segment. Topologically, residues 271–278 (RILRESQK) are cytoplasmic.

Belongs to the tetraspanin (TM4SF) family.

Its subcellular location is the membrane. Its function is as follows. May be involved in the regulation of cell differentiation. The chain is Tetraspanin-13 (TET13) from Arabidopsis thaliana (Mouse-ear cress).